The chain runs to 219 residues: Probable N-acetyltransferase camello (219 aa).

2 helical membrane passes run 42–62 and 64–84; these read FYFI…SYVL and LTSL…EFHG. The region spanning 62–218 is the N-acetyltransferase domain; sequence LSLTSLVALL…TVIYYRYDIK (157 aa).

The protein belongs to the camello family. At the beginning of gastrulation, expressed in deep cells of the presumptive mesoderm. At later gastrulation stages, expressed at the interface between already involuted and preinvoluted mesoderm. At late neurula and tailbud stages, expressed in the deep mass of cells lying ventrally and laterally to the closed blastopore.

The protein localises to the golgi apparatus membrane. Its function is as follows. Plays a role in regulation of gastrulation, possibly by controlled reduction of cell adhesion which is necessary for optimal cell motility. This Xenopus laevis (African clawed frog) protein is Probable N-acetyltransferase camello.